The chain runs to 377 residues: Compound eye opsin BCRH2 (377 aa).

At 1–53 the chain is on the extracellular side; the sequence is MTNATGPQMAYYGAASMDFGYPEGVSIVDFVRPEIKPYVHQHWYNYPPVNPMW. The N-linked (GlcNAc...) asparagine glycan is linked to N3. A helical membrane pass occupies residues 54–78; the sequence is HYLLGVIYLFLGTVSIFGNGLVIYL. At 79 to 90 the chain is on the cytoplasmic side; it reads FNKSAALRTPAN. The helical transmembrane segment at 91–115 threads the bilayer; it reads ILVVNLALSDLIMLTTNVPFFTYNC. Over 116–131 the chain is Extracellular; that stretch reads FSGGVWMFSPQYCEIY. Cysteines 128 and 205 form a disulfide. The helical transmembrane segment at 132–151 threads the bilayer; that stretch reads ACLGAITGVCSIWLLCMISF. Topologically, residues 152-170 are cytoplasmic; the sequence is DRYNIICNGFNGPKLTTGK. Residues 171 to 194 form a helical membrane-spanning segment; the sequence is AVVFALISWVIAIGCALPPFFGWG. Residues 195 to 218 lie on the Extracellular side of the membrane; that stretch reads NYILEGILDSCSYDYLTQDFNTFS. A helical transmembrane segment spans residues 219–246; that stretch reads YNIFIFVFDYFLPAAIIVFSYVFIVKAI. The Cytoplasmic portion of the chain corresponds to 247–281; that stretch reads FAHEAAMRAQAKKMNVSTLRSNEADAQRAEIRIAK. Residues 282–305 form a helical membrane-spanning segment; sequence TALVNVSLWFICWTPYALISLKGV. Residues 306-313 are Extracellular-facing; it reads MGDTSGIT. A helical transmembrane segment spans residues 314-338; sequence PLVSTLPALLAKSCSCYNPFVYAIS. K325 carries the N6-(retinylidene)lysine modification. The Cytoplasmic segment spans residues 339–377; it reads HPKYRLAITQHLPWFCVHETETKSNDDSQSNSTVAQDKA.

It belongs to the G-protein coupled receptor 1 family. Opsin subfamily. Phosphorylated on some or all of the serine and threonine residues present in the C-terminal region. Expressed in all of the seven retinular cells (R1-R7) forming the main rhabdom in each ommatidium.

The protein localises to the membrane. Functionally, visual pigments are the light-absorbing molecules that mediate vision. They consist of an apoprotein, opsin, covalently linked to cis-retinal. This opsin produces visual pigments with maximal absorption in the blue-green region of the spectrum. The polypeptide is Compound eye opsin BCRH2 (Hemigrapsus sanguineus (Asian shore crab)).